Reading from the N-terminus, the 592-residue chain is Pectinesterase/pectinesterase inhibitor 3 (592 aa).

A signal peptide spans 1–35 (MAPSMKEIFSKDNFKKNKKLVLLSAAVALLFVAAV). Residues 36–238 (AGISAGASKA…KITSNNRKLK (203 aa)) constitute a propeptide, removed in mature 42 kDa form. A propeptide spans 36–273 (AGISAGASKA…WLSAGDRRLL (238 aa)) (removed in mature 38 kDa form). The interval 53–212 (PSSHAVLRSS…EHMCSNALAM (160 aa)) is pectinesterase inhibitor 3. Asparagine 96 and asparagine 215 each carry an N-linked (GlcNAc...) asparagine glycan. Positions 281 to 578 (DATVAADGSG…YTAGQFIGGG (298 aa)) are pectinesterase 3. Residues threonine 356 and glutamine 386 each coordinate substrate. The Proton donor; for pectinesterase activity role is filled by aspartate 409. Cysteines 423 and 443 form a disulfide. Residue aspartate 430 is the Nucleophile; for pectinesterase activity of the active site. Residues glutamine 454, arginine 498, and tryptophan 500 each coordinate substrate.

This sequence in the N-terminal section; belongs to the PMEI family. It in the C-terminal section; belongs to the pectinesterase family. In terms of assembly, interacts with BIIDXI and At5g11420. Binds reversibly to PMEI4, PMEI7 and PMEI8 to be inhibited; the stability of the PME3-PMEIs complexes and the inhibition of the pectin methylesterase (PME) activity is pH-dependent, based on protonation status of amino-acids at the complex interface. Expressed in roots, cotyledons, hypocotyls, seedlings, leaves, stems, flowers, dry seeds and siliques. Accumulates in etiolated hypocotyls (at protein level).

It is found in the secreted. Its subcellular location is the extracellular space. The protein resides in the apoplast. It localises to the cell wall. The enzyme catalyses [(1-&gt;4)-alpha-D-galacturonosyl methyl ester](n) + n H2O = [(1-&gt;4)-alpha-D-galacturonosyl](n) + n methanol + n H(+). It participates in glycan metabolism; pectin degradation; 2-dehydro-3-deoxy-D-gluconate from pectin: step 1/5. Regulated negatively by pectinesterase inhibitors (e.g. PMEI3, PMEI4, PMEI7 and PMEI9) in a pH-dependent manner, mainly in slightly acidic conditions (pH 6.0 and 5.0), especially in dark-grown hypocotyls; this processus relies on changes in the protonation of amino acids involved in intermolecular and intramolecular interactions. Its function is as follows. Acts in the modification of cell walls via demethylesterification of cell wall pectin. Required for zinc Zn(2+) homeostasis and to monitor Zn(2+) influence on cell wall-controlled growth processes such as root cell elongation. Monitors seed germination and favors root hairs production. Prevents cruciferin seed storage proteins activity, but promotes the expression of genes involved in cell wall organization and remodeling as well as genes involved in lipid and protein metabolism, during post-germinative growth of seedlings. Confers sensitivity to Zn(2+) when overexpressed. Acts as a susceptibility factor required for the initial colonization of the host tissue by virulent pathogens including Botrytis cinerea and Pectobacterium carotovorum, probably by facilitating cell wall pectine degradation by pathogen pectic enzymes after its demethylesterification. The protein is Pectinesterase/pectinesterase inhibitor 3 of Arabidopsis thaliana (Mouse-ear cress).